The chain runs to 85 residues: Cell division topological specificity factor (85 aa).

This sequence belongs to the MinE family.

Prevents the cell division inhibition by proteins MinC and MinD at internal division sites while permitting inhibition at polar sites. This ensures cell division at the proper site by restricting the formation of a division septum at the midpoint of the long axis of the cell. The chain is Cell division topological specificity factor from Chromobacterium violaceum (strain ATCC 12472 / DSM 30191 / JCM 1249 / CCUG 213 / NBRC 12614 / NCIMB 9131 / NCTC 9757 / MK).